Consider the following 446-residue polypeptide: NADH-ubiquinone oxidoreductase chain 4 (446 aa).

Transmembrane regions (helical) follow at residues 4 to 24 (IILF…YWMV), 56 to 76 (MLSY…LLAS), 93 to 113 (IVIL…FMFY), 114 to 134 (LFFE…GYQP), 141 to 161 (VYLL…IFYV), 182 to 202 (LLYF…LVHL), 212 to 232 (PVSG…YGLL), 245 to 265 (YSFV…LVCL), 272 to 292 (ALIA…LLTM), 297 to 317 (LCGS…LFCL), 330 to 350 (MLIN…WFLL), 373 to 393 (IVSW…FSAA), and 426 to 446 (LLHW…ILWL).

This sequence belongs to the complex I subunit 4 family.

It is found in the mitochondrion membrane. The enzyme catalyses a ubiquinone + NADH + 5 H(+)(in) = a ubiquinol + NAD(+) + 4 H(+)(out). Functionally, core subunit of the mitochondrial membrane respiratory chain NADH dehydrogenase (Complex I) that is believed to belong to the minimal assembly required for catalysis. Complex I functions in the transfer of electrons from NADH to the respiratory chain. The immediate electron acceptor for the enzyme is believed to be ubiquinone. The chain is NADH-ubiquinone oxidoreductase chain 4 (mt:ND4) from Drosophila yakuba (Fruit fly).